The chain runs to 352 residues: 3-isopropylmalate dehydrogenase (352 aa).

Arg-91, Arg-101, Arg-129, and Asp-218 together coordinate substrate. Mg(2+) contacts are provided by Asp-218, Asp-242, and Asp-246. NAD(+) is bound at residue 281-293; it reads GSAPDIAGKGLAN.

The protein belongs to the isocitrate and isopropylmalate dehydrogenases family. LeuB type 1 subfamily. Homodimer. The cofactor is Mg(2+). Requires Mn(2+) as cofactor.

It is found in the cytoplasm. The enzyme catalyses (2R,3S)-3-isopropylmalate + NAD(+) = 4-methyl-2-oxopentanoate + CO2 + NADH. Its pathway is amino-acid biosynthesis; L-leucine biosynthesis; L-leucine from 3-methyl-2-oxobutanoate: step 3/4. Its function is as follows. Catalyzes the oxidation of 3-carboxy-2-hydroxy-4-methylpentanoate (3-isopropylmalate) to 3-carboxy-4-methyl-2-oxopentanoate. The product decarboxylates to 4-methyl-2 oxopentanoate. This Novosphingobium aromaticivorans (strain ATCC 700278 / DSM 12444 / CCUG 56034 / CIP 105152 / NBRC 16084 / F199) protein is 3-isopropylmalate dehydrogenase.